The primary structure comprises 289 residues: Ribosomal RNA small subunit methyltransferase A (289 aa).

Residues N21, L23, G48, E69, D94, and N120 each coordinate S-adenosyl-L-methionine.

Belongs to the class I-like SAM-binding methyltransferase superfamily. rRNA adenine N(6)-methyltransferase family. RsmA subfamily.

It is found in the cytoplasm. The catalysed reaction is adenosine(1518)/adenosine(1519) in 16S rRNA + 4 S-adenosyl-L-methionine = N(6)-dimethyladenosine(1518)/N(6)-dimethyladenosine(1519) in 16S rRNA + 4 S-adenosyl-L-homocysteine + 4 H(+). Functionally, specifically dimethylates two adjacent adenosines (A1518 and A1519) in the loop of a conserved hairpin near the 3'-end of 16S rRNA in the 30S particle. May play a critical role in biogenesis of 30S subunits. The chain is Ribosomal RNA small subunit methyltransferase A from Actinobacillus pleuropneumoniae serotype 5b (strain L20).